The primary structure comprises 669 residues: DNA mismatch repair protein MutL (669 aa).

The tract at residues 357-379 (EQRQNTENNQEKTFSSEESNSKS) is disordered. Positions 361–379 (NTENNQEKTFSSEESNSKS) are enriched in polar residues.

The protein belongs to the DNA mismatch repair MutL/HexB family.

Its function is as follows. This protein is involved in the repair of mismatches in DNA. It is required for dam-dependent methyl-directed DNA mismatch repair. May act as a 'molecular matchmaker', a protein that promotes the formation of a stable complex between two or more DNA-binding proteins in an ATP-dependent manner without itself being part of a final effector complex. This Staphylococcus aureus (strain Mu3 / ATCC 700698) protein is DNA mismatch repair protein MutL.